Here is a 395-residue protein sequence, read N- to C-terminus: Type II restriction enzyme BsuFI (395 aa).

In terms of assembly, homodimer. Mg(2+) serves as cofactor.

The enzyme catalyses Endonucleolytic cleavage of DNA to give specific double-stranded fragments with terminal 5'-phosphates.. In terms of biological role, a P subtype restriction enzyme that recognizes the double-stranded sequence 5'-CCGG-3' and cleaves after C-1. This Bacillus subtilis protein is Type II restriction enzyme BsuFI (hsdFR).